A 485-amino-acid chain; its full sequence is Trk system potassium uptake protein TrkG (485 aa).

The Cytoplasmic segment spans residues 1-5 (MNTSH). Residues 6 to 32 (VRVVTHMCGFLVWLYSLSMLPPMVVAL) traverse the membrane as a helical segment. The Periplasmic portion of the chain corresponds to 33–38 (FYKEKS). A helical transmembrane segment spans residues 39–60 (LFVFFITFVIFFCIGGGAWYTT). The Cytoplasmic portion of the chain corresponds to 61–68 (KKSGIQLR). A helical membrane pass occupies residues 69 to 93 (TRDGFIIIVMFWILFSVISAFPLWI). Residues 101–112 (FIDALFEGVSGI) constitute an intramembrane region (helical; Pore-forming). An intramembrane segment occupies 113 to 118 (TTTGAT). The tract at residues 113–118 (TTTGAT) is selectivity filter part 1. K(+) is bound by residues Thr-114 and Thr-115. Residues 119–127 (VIDDVSSLP) lie on the Periplasmic side of the membrane. A helical transmembrane segment spans residues 128 to 153 (RAYLYYRSQLNFIGGLGVIVLAVAVL). Topologically, residues 154–180 (PLLGIGGAKLYQSEMPGPFKDDKLTPR) are cytoplasmic. The chain crosses the membrane as a helical span at residues 181–205 (LADTSRTLWITYSLLGIACIVCYRL). The Periplasmic portion of the chain corresponds to 206-208 (AGM). Residue Pro-209 is an intramembrane region. The helical; Pore-forming intramembrane region spans 210-221 (LFDAICHGISTV). The stretch at 222 to 227 (SLGGFS) is an intramembrane region. The selectivity filter part 2 stretch occupies residues 222-227 (SLGGFS). K(+) is bound by residues Leu-223 and Gly-224. The Periplasmic portion of the chain corresponds to 228–237 (THSESIGYFN). Positions 238 to 253 (NYLVELVAGSFSLLSA) form an intramembrane region, helical. Residues 277–297 (LRFFLLIALGVIIVTSFQVWH) form a helical membrane-spanning segment. Residues 303-318 (LHGSFIHSFFLASSML) constitute an intramembrane region (helical; Pore-forming). An intramembrane segment occupies 319–324 (TDNGLA). The segment at 319 to 324 (TDNGLA) is selectivity filter part 3. Asp-320 and Asn-321 together coordinate K(+). Residues 325 to 332 (TQDYASWP) lie on the Periplasmic side of the membrane. Positions 333-344 (THTIVFLLLSSF) form an intramembrane region, helical. Positions 345–357 (FGGCIGSTCGGIK) form an intramembrane region, note=Loop between two helices. Residues 392–419 (TDRVMRSVWSFFFLYTLFTVFFILVLNG) form a helical membrane-spanning segment. At 420–421 (MG) the chain is on the periplasmic side. An intramembrane segment occupies 422 to 423 (YD). Positions 424-434 (FLTSFATVAAC) form an intramembrane region, helical; Pore-forming. The stretch at 435–441 (INNMGLG) is an intramembrane region. The interval 436-441 (NNMGLG) is selectivity filter part 4. Positions 437 and 438 each coordinate K(+). The Periplasmic portion of the chain corresponds to 442–453 (FGATASSFGVLN). Residues 454 to 465 (DIAKCLMCIAMI) constitute an intramembrane region (helical).

This sequence belongs to the TrkH potassium transport family.

Its subcellular location is the cell inner membrane. Its function is as follows. Low-affinity potassium transport system. Interacts with Trk system potassium uptake protein TrkA. Requires TrkE (sapD) for maximal transport activity, low activity is seen in its absence; no further stimulation is seen with SapF. Transport in the absence of SapD is dependent on a high membrane potential and a high cytoplasmic ATP concentration, suggesting this protein may be able to interact with other ATP-binding proteins. Can transport potassium and rubidium. The chain is Trk system potassium uptake protein TrkG (trkG) from Escherichia coli (strain K12).